We begin with the raw amino-acid sequence, 309 residues long: Ecotin-like protein 3 (309 aa).

The interval 140-309 (QQELEAPAVS…KSGRDSRRNS (170 aa)) is disordered. The segment covering 156–167 (VRERQNNPEGHA) has biased composition (basic and acidic residues). Residues 168–180 (HPVVVHSVESPEV) show a composition bias toward low complexity. Residues 181 to 190 (SGHKDGDQPM) are compositionally biased toward basic and acidic residues. Positions 196-205 (LKQSCSNSSR) are enriched in low complexity. Residues 209 to 221 (HSASGSSPKNTPL) show a composition bias toward polar residues. Residues 261–279 (SDSTSSRKDDQDSGYEKKV) show a composition bias toward basic and acidic residues. Positions 290 to 299 (SSPKRSASPK) are enriched in low complexity.

This sequence belongs to the protease inhibitor I11 (ecotin) family.

The protein is Ecotin-like protein 3 of Leishmania braziliensis.